We begin with the raw amino-acid sequence, 92 residues long: MLKAIRRFFGEKASGQVARRRMQVVLMHDRMDLTPDIMEALRNDILAVISRYMEIDSRSIRVDLEQGKEYMALVSNIQIKRVYRKAAPDIRS.

It belongs to the MinE family.

Its function is as follows. Prevents the cell division inhibition by proteins MinC and MinD at internal division sites while permitting inhibition at polar sites. This ensures cell division at the proper site by restricting the formation of a division septum at the midpoint of the long axis of the cell. The sequence is that of Cell division topological specificity factor from Syntrophobacter fumaroxidans (strain DSM 10017 / MPOB).